We begin with the raw amino-acid sequence, 111 residues long: Phosphoribosyl-ATP pyrophosphatase (111 aa).

Belongs to the PRA-PH family.

It is found in the cytoplasm. It carries out the reaction 1-(5-phospho-beta-D-ribosyl)-ATP + H2O = 1-(5-phospho-beta-D-ribosyl)-5'-AMP + diphosphate + H(+). It participates in amino-acid biosynthesis; L-histidine biosynthesis; L-histidine from 5-phospho-alpha-D-ribose 1-diphosphate: step 2/9. This Azotobacter vinelandii (strain DJ / ATCC BAA-1303) protein is Phosphoribosyl-ATP pyrophosphatase.